We begin with the raw amino-acid sequence, 414 residues long: Protein phosphatase 2C homolog 3 (414 aa).

Residues 23-288 (LYGLSSMQGW…DNMTVCIVAL (266 aa)) enclose the PPM-type phosphatase domain. Residues Asp-62, Gly-63, Asp-230, and Asp-279 each coordinate Mn(2+). 2 disordered regions span residues 313–368 (APPE…TNGS) and 380–414 (FPHKAEEENSSSETDIVNSNKDVADDHKEAVSAAD). Over residues 350–363 (GYDKDANENSKEDD) the composition is skewed to basic and acidic residues. A compositionally biased stretch (polar residues) spans 390-400 (SSETDIVNSNK). Over residues 401–414 (DVADDHKEAVSAAD) the composition is skewed to basic and acidic residues.

It belongs to the PP2C family. In terms of assembly, monomer. The cofactor is Mg(2+). Requires Mn(2+) as cofactor.

The protein resides in the cytoplasm. It is found in the nucleus. It catalyses the reaction O-phospho-L-seryl-[protein] + H2O = L-seryl-[protein] + phosphate. The catalysed reaction is O-phospho-L-threonyl-[protein] + H2O = L-threonyl-[protein] + phosphate. Functionally, dephosphorylating regulator for many key proteins. Has an important role in osmotic stability and cell shape control. It may negatively regulate the osmosensing signal transmitted through wis1 map kinase. In Schizosaccharomyces pombe (strain 972 / ATCC 24843) (Fission yeast), this protein is Protein phosphatase 2C homolog 3 (ptc3).